We begin with the raw amino-acid sequence, 195 residues long: Dephospho-CoA kinase (195 aa).

A DPCK domain is found at 3 to 195 (IIGLTGSIAM…FSIIENLLKN (193 aa)). 11-16 (AMGKST) is an ATP binding site.

Belongs to the CoaE family.

The protein resides in the cytoplasm. The catalysed reaction is 3'-dephospho-CoA + ATP = ADP + CoA + H(+). It participates in cofactor biosynthesis; coenzyme A biosynthesis; CoA from (R)-pantothenate: step 5/5. Catalyzes the phosphorylation of the 3'-hydroxyl group of dephosphocoenzyme A to form coenzyme A. The protein is Dephospho-CoA kinase of Bartonella quintana (strain Toulouse) (Rochalimaea quintana).